Here is a 234-residue protein sequence, read N- to C-terminus: Proteasome subunit beta (234 aa).

A disordered region spans residues 1–35; it reads MNPDLNMNPHDSGRTDPYAPELGEIATDEGDGENV. Positions 1–39 are cleaved as a propeptide — removed in mature form; by autocatalysis; the sequence is MNPDLNMNPHDSGRTDPYAPELGEIATDEGDGENVTKTG. The Nucleophile role is filled by Thr-40.

This sequence belongs to the peptidase T1B family. As to quaternary structure, the 20S proteasome core is composed of 14 alpha and 14 beta subunits that assemble into four stacked heptameric rings, resulting in a barrel-shaped structure. The two inner rings, each composed of seven catalytic beta subunits, are sandwiched by two outer rings, each composed of seven alpha subunits. The catalytic chamber with the active sites is on the inside of the barrel. Has a gated structure, the ends of the cylinder being occluded by the N-termini of the alpha-subunits. Is capped at one or both ends by the proteasome regulatory ATPase, PAN.

It is found in the cytoplasm. The enzyme catalyses Cleavage of peptide bonds with very broad specificity.. The formation of the proteasomal ATPase PAN-20S proteasome complex, via the docking of the C-termini of PAN into the intersubunit pockets in the alpha-rings, triggers opening of the gate for substrate entry. Interconversion between the open-gate and close-gate conformations leads to a dynamic regulation of the 20S proteasome proteolysis activity. In terms of biological role, component of the proteasome core, a large protease complex with broad specificity involved in protein degradation. This chain is Proteasome subunit beta, found in Halorhabdus utahensis (strain DSM 12940 / JCM 11049 / AX-2).